Reading from the N-terminus, the 316-residue chain is Ribosomal RNA large subunit methyltransferase F (316 aa).

This sequence belongs to the methyltransferase superfamily. METTL16/RlmF family.

Its subcellular location is the cytoplasm. It catalyses the reaction adenosine(1618) in 23S rRNA + S-adenosyl-L-methionine = N(6)-methyladenosine(1618) in 23S rRNA + S-adenosyl-L-homocysteine + H(+). Functionally, specifically methylates the adenine in position 1618 of 23S rRNA. The sequence is that of Ribosomal RNA large subunit methyltransferase F from Pseudomonas entomophila (strain L48).